Reading from the N-terminus, the 147-residue chain is uncharacterized protein (147 aa).

This is an uncharacterized protein from Schizosaccharomyces pombe (strain 972 / ATCC 24843) (Fission yeast).